A 412-amino-acid chain; its full sequence is Na(+)-translocating NADH-quinone reductase subunit B (412 aa).

Transmembrane regions (helical) follow at residues 57–77, 127–147, and 163–183; these read MILV…NVGL, VFFL…EVLF, and SILF…ALGI. At T236 the chain carries FMN phosphoryl threonine. The next 5 helical transmembrane spans lie at 270 to 290, 297 to 317, 322 to 342, 358 to 378, and 381 to 401; these read GSIG…ILFG, IVAG…VIGS, MFAM…GMMF, WSYG…NPAY, and GMML…YLVV.

This sequence belongs to the NqrB/RnfD family. Composed of six subunits; NqrA, NqrB, NqrC, NqrD, NqrE and NqrF. FMN serves as cofactor.

It localises to the cell inner membrane. It catalyses the reaction a ubiquinone + n Na(+)(in) + NADH + H(+) = a ubiquinol + n Na(+)(out) + NAD(+). NQR complex catalyzes the reduction of ubiquinone-1 to ubiquinol by two successive reactions, coupled with the transport of Na(+) ions from the cytoplasm to the periplasm. NqrA to NqrE are probably involved in the second step, the conversion of ubisemiquinone to ubiquinol. The chain is Na(+)-translocating NADH-quinone reductase subunit B from Klebsiella pneumoniae subsp. pneumoniae (strain ATCC 700721 / MGH 78578).